We begin with the raw amino-acid sequence, 104 residues long: Nucleoid-associated protein Moth_0028 (104 aa).

This sequence belongs to the YbaB/EbfC family. Homodimer.

The protein localises to the cytoplasm. It is found in the nucleoid. In terms of biological role, binds to DNA and alters its conformation. May be involved in regulation of gene expression, nucleoid organization and DNA protection. The chain is Nucleoid-associated protein Moth_0028 from Moorella thermoacetica (strain ATCC 39073 / JCM 9320).